A 251-amino-acid polypeptide reads, in one-letter code: HTH-type transcriptional regulator UlaR (251 aa).

The 56-residue stretch at 3–58 folds into the HTH deoR-type domain; it reads EAQRHQILLEMLAQLGFVTVEKVVERLGISPATARRDINKLDESGKLKKVRNGAEA. A DNA-binding region (H-T-H motif) is located at residues 20-39; it reads VTVEKVVERLGISPATARRD.

The protein localises to the cytoplasm. Functionally, represses ulaG and the ulaABCDEF operon. The protein is HTH-type transcriptional regulator UlaR of Escherichia coli (strain SMS-3-5 / SECEC).